The sequence spans 62 residues: Large ribosomal subunit protein uL30 (62 aa).

This sequence belongs to the universal ribosomal protein uL30 family. Part of the 50S ribosomal subunit.

This is Large ribosomal subunit protein uL30 from Hydrogenovibrio crunogenus (strain DSM 25203 / XCL-2) (Thiomicrospira crunogena).